A 147-amino-acid polypeptide reads, in one-letter code: 3-dehydroquinate dehydratase (147 aa).

The active-site Proton acceptor is the tyrosine 24. 3 residues coordinate substrate: asparagine 75, histidine 81, and aspartate 88. Histidine 101 (proton donor) is an active-site residue. Substrate-binding positions include 102-103 (IS) and arginine 112.

Belongs to the type-II 3-dehydroquinase family. Homododecamer.

The enzyme catalyses 3-dehydroquinate = 3-dehydroshikimate + H2O. The protein operates within metabolic intermediate biosynthesis; chorismate biosynthesis; chorismate from D-erythrose 4-phosphate and phosphoenolpyruvate: step 3/7. In terms of biological role, catalyzes a trans-dehydration via an enolate intermediate. The sequence is that of 3-dehydroquinate dehydratase from Cereibacter sphaeroides (strain ATCC 17023 / DSM 158 / JCM 6121 / CCUG 31486 / LMG 2827 / NBRC 12203 / NCIMB 8253 / ATH 2.4.1.) (Rhodobacter sphaeroides).